A 314-amino-acid chain; its full sequence is Hydrolase 4 (314 aa).

The short motif at 73 to 75 (HGA) is the Involved in the stabilization of the negatively charged intermediate by the formation of the oxyanion hole element. Active-site residues include S165 and D260.

Belongs to the 'GDXG' lipolytic enzyme family.

It participates in alkaloid biosynthesis. Component of the seco-iridoid and derivatives monoterpenoid indole alkaloids (MIAs, e.g. vincadifformine) biosynthesis pathway. Catalyzes the conversion of O-acetylstemmadenine (OAS) to vincadifformine. May also trigger the formation of additional unknown MIAs. This is Hydrolase 4 from Catharanthus roseus (Madagascar periwinkle).